Consider the following 1379-residue polypeptide: DNA-directed RNA polymerase subunit beta'' (1379 aa).

Positions 220, 293, 300, and 303 each coordinate Zn(2+).

The protein belongs to the RNA polymerase beta' chain family. RpoC2 subfamily. As to quaternary structure, in plastids the minimal PEP RNA polymerase catalytic core is composed of four subunits: alpha, beta, beta', and beta''. When a (nuclear-encoded) sigma factor is associated with the core the holoenzyme is formed, which can initiate transcription. It depends on Zn(2+) as a cofactor.

Its subcellular location is the plastid. The protein localises to the chloroplast. The enzyme catalyses RNA(n) + a ribonucleoside 5'-triphosphate = RNA(n+1) + diphosphate. Its function is as follows. DNA-dependent RNA polymerase catalyzes the transcription of DNA into RNA using the four ribonucleoside triphosphates as substrates. In Crucihimalaya wallichii (Rock-cress), this protein is DNA-directed RNA polymerase subunit beta''.